Here is a 280-residue protein sequence, read N- to C-terminus: Fructose-1,6-bisphosphatase class 1 (280 aa).

Mg(2+) contacts are provided by E64, D83, L85, and D86. Residues 86 to 89 (DGSS), Y189, and K220 contribute to the substrate site. Residue E226 coordinates Mg(2+).

The protein belongs to the FBPase class 1 family. As to quaternary structure, homotetramer. It depends on Mg(2+) as a cofactor.

It is found in the cytoplasm. The enzyme catalyses beta-D-fructose 1,6-bisphosphate + H2O = beta-D-fructose 6-phosphate + phosphate. Its pathway is carbohydrate biosynthesis; gluconeogenesis. The chain is Fructose-1,6-bisphosphatase class 1 from Campylobacter jejuni subsp. jejuni serotype O:23/36 (strain 81-176).